Reading from the N-terminus, the 193-residue chain is Heat shock protein beta-1 (193 aa).

A phosphoserine mark is found at S15 and S80. The sHSP domain maps to 74–182 (RALSELSSGI…QSSEITIPVT (109 aa)).

Belongs to the small heat shock protein (HSP20) family. As to quaternary structure, homooligomer. Homodimer; becomes monomeric upon activation. Heterooligomer. In terms of tissue distribution, smooth, cardiac and skeletal muscle, hardly detectable in fibroblasts or focal contacts.

The protein localises to the cytoplasm. It is found in the nucleus. Its subcellular location is the cytoskeleton. The protein resides in the spindle. Its function is as follows. Small heat shock protein which functions as a molecular chaperone probably maintaining denatured proteins in a folding-competent state. Plays a role in stress resistance and actin organization. The polypeptide is Heat shock protein beta-1 (HSPB1) (Gallus gallus (Chicken)).